The sequence spans 143 residues: Myocilin opposite strand protein (143 aa).

Residues 65–111 (MATRDETITKKSGEGEEMLPSMGMDHESPSKAHLMVPPAPPPSPADA) form a disordered region. Residues 66–78 (ATRDETITKKSGE) are compositionally biased toward basic and acidic residues.

This Mus musculus (Mouse) protein is Myocilin opposite strand protein.